A 605-amino-acid chain; its full sequence is Capsid scaffolding protein (605 aa).

Residues histidine 52, serine 120, and histidine 139 each act as charge relay system in the active site. Residues 326–344 (GEFVLIPTAYYSQLLTGQT) are interaction with pAP. Residues 585–605 (IQGSTADDADMFANQMMVGRC) are interaction with major capsid protein.

This sequence belongs to the herpesviridae capsid scaffolding protein family. Homomultimer. Interacts with major capsid protein. As to quaternary structure, exists in a monomer-dimer equilibrium with the dimer being the active species. In terms of processing, capsid scaffolding protein is cleaved by assemblin after formation of the spherical procapsid. As a result, the capsid obtains its mature, icosahedral shape. Cleavages occur at two or more sites: release (R-site) and maturation (M-site).

The protein localises to the host cytoplasm. Its subcellular location is the host nucleus. It carries out the reaction Cleaves -Ala-|-Ser- and -Ala-|-Ala- bonds in the scaffold protein.. In terms of biological role, acts as a scaffold protein by binding major capsid protein in the cytoplasm, inducing the nuclear localization of both proteins. Multimerizes in the nucleus such as major capsid protein forms the icosahedral T=16 capsid. Autocatalytic cleavage releases the assembly protein, and subsequently abolishes interaction with major capsid protein. Cleavages products are evicted from the capsid before or during DNA packaging. Its function is as follows. Protease that plays an essential role in virion assembly within the nucleus. Catalyzes the cleavage of the assembly protein after formation of the spherical procapsid. By that cleavage, the capsid matures and gains its icosahedral shape. The cleavage sites seem to include -Ala-Ser-, -Ala-Ala-, as well as Ala-Thr bonds. Assemblin and cleavages products are evicted from the capsid before or during DNA packaging. Functionally, plays a major role in capsid assembly. Acts as a scaffold protein by binding major capsid protein. Multimerizes in the nucleus such as major capsid protein forms the icosahedral T=16 capsid. Cleaved by assemblin after capsid completion. The cleavages products are evicted from the capsid before or during DNA packaging. The protein is Capsid scaffolding protein (33) of Varicella-zoster virus (strain Dumas) (HHV-3).